Here is a 417-residue protein sequence, read N- to C-terminus: Cytoplasmic tRNA 2-thiolation protein 2 (417 aa).

Over residues 1–11 the composition is skewed to acidic residues; it reads MCSIVEDDFGD. The tract at residues 1–24 is disordered; it reads MCSIVEDDFGDEGGAHAMKEDTPQ. Positions 13–22 are enriched in basic and acidic residues; sequence GGAHAMKEDT.

It belongs to the CTU2/NCS2 family.

Its subcellular location is the cytoplasm. The protein operates within tRNA modification; 5-methoxycarbonylmethyl-2-thiouridine-tRNA biosynthesis. Its function is as follows. Plays a central role in 2-thiolation of mcm(5)S(2)U at tRNA wobble positions of tRNA(Lys), tRNA(Glu) and tRNA(Gln). May act by forming a heterodimer with NCS6/CTU1 that ligates sulfur from thiocarboxylated URM1 onto the uridine of tRNAs at wobble position. In Anopheles gambiae (African malaria mosquito), this protein is Cytoplasmic tRNA 2-thiolation protein 2.